The following is a 288-amino-acid chain: uncharacterized protein (288 aa).

The region spanning glycine 5–lysine 81 is the HTH rpiR-type domain. Residues leucine 41–arginine 60 constitute a DNA-binding region (H-T-H motif). Residues valine 129–aspartate 269 enclose the SIS domain.

This is an uncharacterized protein from Haemophilus influenzae (strain ATCC 51907 / DSM 11121 / KW20 / Rd).